The following is a 400-amino-acid chain: Putative niacin/nicotinamide transporter NiaP (400 aa).

Residues methionine 1–glycine 14 lie on the Cytoplasmic side of the membrane. Residues valine 15–alanine 35 form a helical membrane-spanning segment. At alanine 36–lysine 49 the chain is on the extracellular side. A helical membrane pass occupies residues tryptophan 50–alanine 70. The Cytoplasmic segment spans residues aspartate 71 to lysine 77. The next 2 membrane-spanning stretches (helical) occupy residues valine 78–serine 98 and leucine 99–valine 119. Topologically, residues alanine 120–serine 142 are cytoplasmic. Residues phenylalanine 143–glycine 163 form a helical membrane-spanning segment. The Extracellular segment spans residues tryptophan 164–glutamine 165. A helical transmembrane segment spans residues alanine 166 to proline 186. The Cytoplasmic portion of the chain corresponds to aspartate 187–threonine 217. A helical transmembrane segment spans residues valine 218–leucine 238. The Extracellular segment spans residues proline 239–phenylalanine 253. The helical transmembrane segment at glutamate 254 to isoleucine 274 threads the bilayer. The Cytoplasmic segment spans residues glutamate 275–lysine 280. A helical membrane pass occupies residues tryptophan 281 to aspartate 301. At serine 302–serine 304 the chain is on the extracellular side. A helical membrane pass occupies residues leucine 305–tyrosine 325. The Cytoplasmic segment spans residues alanine 326–threonine 343. The chain crosses the membrane as a helical span at residues threonine 344 to alanine 364. Residues arginine 365–serine 370 are Extracellular-facing. A helical transmembrane segment spans residues valine 371 to glycine 391. The Cytoplasmic segment spans residues lysine 392 to glutamate 400.

The protein belongs to the major facilitator superfamily. Sugar transporter (TC 2.A.1.1) family.

It localises to the cell membrane. Functionally, probably involved in the uptake of amidated and deamidated forms of niacin. Increases the growth rate of E.coli that is unable to make niacin de novo; confers increased sensitivity to the toxic niacin analog 6-amino-nicotinamide to wild-type E.coli. There is probably another mechanism for niacin uptake. This Bacillus subtilis (strain 168) protein is Putative niacin/nicotinamide transporter NiaP.